Here is a 271-residue protein sequence, read N- to C-terminus: Ribosomal RNA small subunit methyltransferase A (271 aa).

Residues Asn28, Leu30, Gly54, Glu75, Asp99, and Asn117 each coordinate S-adenosyl-L-methionine.

Belongs to the class I-like SAM-binding methyltransferase superfamily. rRNA adenine N(6)-methyltransferase family. RsmA subfamily.

The protein resides in the cytoplasm. It catalyses the reaction adenosine(1518)/adenosine(1519) in 16S rRNA + 4 S-adenosyl-L-methionine = N(6)-dimethyladenosine(1518)/N(6)-dimethyladenosine(1519) in 16S rRNA + 4 S-adenosyl-L-homocysteine + 4 H(+). Its function is as follows. Specifically dimethylates two adjacent adenosines (A1518 and A1519) in the loop of a conserved hairpin near the 3'-end of 16S rRNA in the 30S particle. May play a critical role in biogenesis of 30S subunits. The polypeptide is Ribosomal RNA small subunit methyltransferase A (Thermus thermophilus (strain ATCC 27634 / DSM 579 / HB8)).